We begin with the raw amino-acid sequence, 203 residues long: ER membrane protein complex subunit 8/9 homolog (203 aa).

The region spanning 4 to 140 (YKVSERAYAK…IQVFNCPGDS (137 aa)) is the MPN domain.

Belongs to the EMC8/EMC9 family. In terms of assembly, component of the ER membrane protein complex (EMC).

It is found in the endoplasmic reticulum membrane. In terms of biological role, part of the endoplasmic reticulum membrane protein complex (EMC) that enables the energy-independent insertion into endoplasmic reticulum membranes of newly synthesized multi-pass membrane proteins like rhodopsins. This is ER membrane protein complex subunit 8/9 homolog from Drosophila melanogaster (Fruit fly).